Consider the following 339-residue polypeptide: Phenylalanine--tRNA ligase alpha subunit (339 aa).

Glu-247 is a binding site for Mg(2+).

Belongs to the class-II aminoacyl-tRNA synthetase family. Phe-tRNA synthetase alpha subunit type 1 subfamily. As to quaternary structure, tetramer of two alpha and two beta subunits. It depends on Mg(2+) as a cofactor.

The protein localises to the cytoplasm. The enzyme catalyses tRNA(Phe) + L-phenylalanine + ATP = L-phenylalanyl-tRNA(Phe) + AMP + diphosphate + H(+). The polypeptide is Phenylalanine--tRNA ligase alpha subunit (pheS) (Deinococcus radiodurans (strain ATCC 13939 / DSM 20539 / JCM 16871 / CCUG 27074 / LMG 4051 / NBRC 15346 / NCIMB 9279 / VKM B-1422 / R1)).